The primary structure comprises 468 residues: Membrane-associated tyrosine- and threonine-specific cdc2-inhibitory kinase wee-1.1 (468 aa).

The segment covering 25 to 42 (SKDEPNKLNTSRKLEVTT) has biased composition (basic and acidic residues). A disordered region spans residues 25–63 (SKDEPNKLNTSRKLEVTTKKNQSNNKKRPPPINKARKSL). The span at 49–61 (NKKRPPPINKARK) shows a compositional bias: basic residues. Residues 106–357 (FNFDKNLGKG…SELMKNHVVK (252 aa)) form the Protein kinase domain. Residues 112-120 (LGKGSFGEV) and Lys135 contribute to the ATP site. Asp224 functions as the Proton acceptor in the catalytic mechanism. Residues Asn229 and Asp242 each coordinate Mg(2+). Residues 425 to 453 (EDEYEVFSPPRTPVKKSRYQQTMPEVSPP) are disordered.

It belongs to the protein kinase superfamily. Ser/Thr protein kinase family. WEE1 subfamily. In terms of tissue distribution, in the 12-13-cell embryo, expressed in the E blastomere. In the 16-cell embryo, expressed in the eight AB cells.

It is found in the nucleus. It carries out the reaction L-seryl-[protein] + ATP = O-phospho-L-seryl-[protein] + ADP + H(+). It catalyses the reaction L-threonyl-[protein] + ATP = O-phospho-L-threonyl-[protein] + ADP + H(+). In terms of biological role, acts as a negative regulator of entry into mitosis (G2 to M transition) by phosphorylation of the CDK1 kinase. The protein is Membrane-associated tyrosine- and threonine-specific cdc2-inhibitory kinase wee-1.1 (wee-1.1) of Caenorhabditis elegans.